Consider the following 258-residue polypeptide: Tryptophan synthase alpha chain (258 aa).

Catalysis depends on proton acceptor residues glutamate 47 and aspartate 58.

Belongs to the TrpA family. Tetramer of two alpha and two beta chains.

The enzyme catalyses (1S,2R)-1-C-(indol-3-yl)glycerol 3-phosphate + L-serine = D-glyceraldehyde 3-phosphate + L-tryptophan + H2O. It functions in the pathway amino-acid biosynthesis; L-tryptophan biosynthesis; L-tryptophan from chorismate: step 5/5. Functionally, the alpha subunit is responsible for the aldol cleavage of indoleglycerol phosphate to indole and glyceraldehyde 3-phosphate. The protein is Tryptophan synthase alpha chain of Bacillus cereus (strain ZK / E33L).